Reading from the N-terminus, the 50-residue chain is KFCEKPSGTWSGVCGNSGACKDQCIRLEGAKHGSCNYKPPAHRCICYYEC.

4 disulfides stabilise this stretch: C3–C50, C14–C35, C20–C44, and C24–C46.

Contains 4 disulfide bonds.

It is found in the secreted. Antimicrobial peptide active against fungi, Gram-positive and Gram-negative bacteria. Inhibits growth of hyphae in the fungi A.niger (IC(50)=3.5 ug/ml), B.sorokiniana (IC(50)=3.0 ug/ml), F.oxysporum (IC(50)=9.5 ug/ml), F.graminearum (IC(50)=6.9 ug/ml), F.culmorum (IC(50)=6.9 ug/ml) and B.cinerea (IC(50)=27.4 ug/ml). Has no effect on spore germination. Destroys spores in germinated conidia by disruption of cell walls and membranes in A.niger and B.sorokiniana. Causes vacuolization of germinated macro- and microconidia in F.oxysporum, F.graminearum and F.culmorum. Strongly inhibits growth of P.infestans on potato tubers above concentrations of 13.6 ug/ml. Inhibits growth of Gram-positive bacteria C.michiganensis and B.subtilis and of Gram-negative bacteria P.syringae, E.carotovora and E.coli. In Nigella sativa (Black cumin), this protein is Defensin D1.